The following is a 138-amino-acid chain: Acidic phospholipase A2 1 (138 aa).

The first 16 residues, 1-16, serve as a signal peptide directing secretion; that stretch reads MRTLWIVAVWLMGVEG. Intrachain disulfides connect cysteine 42-cysteine 131, cysteine 44-cysteine 60, cysteine 59-cysteine 111, cysteine 65-cysteine 138, cysteine 66-cysteine 104, cysteine 73-cysteine 97, and cysteine 91-cysteine 102. Residues tyrosine 43, glycine 45, and glycine 47 each contribute to the Ca(2+) site. Histidine 63 is a catalytic residue. A Ca(2+)-binding site is contributed by aspartate 64. Residue aspartate 105 is part of the active site.

Monomer. Ca(2+) serves as cofactor. Expressed by the venom gland.

The protein resides in the secreted. The enzyme catalyses a 1,2-diacyl-sn-glycero-3-phosphocholine + H2O = a 1-acyl-sn-glycero-3-phosphocholine + a fatty acid + H(+). Its function is as follows. Snake venom phospholipase that inhibits ADP- and collagen-induced human platelet aggregation. This inhibition is completely inhibited by abolition of catalytic activity in case of collagen as inducer and partially inhibited in case of ADP as inducer. PLA2 catalyzes the calcium-dependent hydrolysis of the 2-acyl groups in 3-sn-phosphoglycerides. The chain is Acidic phospholipase A2 1 from Macrovipera lebetinus (Levantine viper).